Consider the following 75-residue polypeptide: Small ribosomal subunit protein bS18 (75 aa).

Belongs to the bacterial ribosomal protein bS18 family. In terms of assembly, part of the 30S ribosomal subunit. Forms a tight heterodimer with protein bS6.

Binds as a heterodimer with protein bS6 to the central domain of the 16S rRNA, where it helps stabilize the platform of the 30S subunit. The chain is Small ribosomal subunit protein bS18 from Buchnera aphidicola subsp. Schizaphis graminum (strain Sg).